The primary structure comprises 327 residues: 4-hydroxy-2-oxoglutarate aldolase, mitochondrial (327 aa).

The transit peptide at 1–25 (MLGPQVWSSVRQGLSRSLSRNVGVW) directs the protein to the mitochondrion. 77-78 (SN) is a substrate binding site. Catalysis depends on Lys-196, which acts as the Schiff-base intermediate with substrate. Residues Ser-198 and Gly-222 each coordinate substrate.

It belongs to the DapA family. In terms of assembly, homotetramer.

The protein resides in the mitochondrion. It carries out the reaction (4S)-4-hydroxy-2-oxoglutarate = glyoxylate + pyruvate. The enzyme catalyses (4R)-4-hydroxy-2-oxoglutarate = glyoxylate + pyruvate. Its activity is regulated as follows. Inhibited by divalent cations. Catalyzes the final step in the metabolic pathway of hydroxyproline. The polypeptide is 4-hydroxy-2-oxoglutarate aldolase, mitochondrial (HOGA1) (Homo sapiens (Human)).